A 653-amino-acid polypeptide reads, in one-letter code: E3 ubiquitin-protein ligase TRIM32 (653 aa).

At alanine 2 the chain carries N-acetylalanine. Residues 20 to 65 (CPICMESFTEEQLRPKLLHCGHTICRQCLEKLLASSINGVRCPFCS) form an RING-type zinc finger. Serine 55 is modified (phosphoserine; by CHEK2). Positions 100, 103, 123, and 128 each coordinate Zn(2+). The B box-type zinc-finger motif lies at 103 to 133 (CGRRLPRQFCRSCGLVLCEPCREADHQPPGH). The stretch at 138 to 197 (VKEAAEERRRDFGEKLTRLRELMGELQRRKAALEGVSKDLQARYKAVLQEYGHEERRVQD) forms a coiled coil. 3 positions are modified to phosphoserine: serine 328, serine 335, and serine 339. NHL repeat units follow at residues 358 to 401 (LKKM…FTRK), 415 to 458 (DSFV…YTLD), 459 to 499 (GHCV…FTVD), 562 to 605 (GRQI…FPKG), and 606 to 646 (GGYS…YSYH).

This sequence belongs to the TRIM/RBCC family. It self-associates. Interacts with DTNBP1. Interacts with PIAS4/PIASY upon treatment with UVB and TNF-alpha. Interacts with AMBRA1; promoting activation of ULK1 through unanchored 'Lys-63'-linked polyubiquitin chains. Interacts with TICAM1 and TAX1BP1; these interactions target TICAM1 to TAX1BP1-mediated selective autophagic degradation. As to quaternary structure, (Microbial infection) Interacts with S.typhimurium protein SseK3; SseK3 does not glycosylate TRIM32. Ubiquitinated. Post-translationally, phosphorylation at Ser-55 by CHEK2 under oxidative stress, activates the E3 ligase activity and promotes ATG7 ubiquitination leading to positive regulation of the autophagosme assembly. Spleen, thymus, prostate, testis, ovary, intestine, colon and skeletal muscle.

The protein resides in the cytoplasm. It localises to the mitochondrion. Its subcellular location is the endoplasmic reticulum. It carries out the reaction S-ubiquitinyl-[E2 ubiquitin-conjugating enzyme]-L-cysteine + [acceptor protein]-L-lysine = [E2 ubiquitin-conjugating enzyme]-L-cysteine + N(6)-ubiquitinyl-[acceptor protein]-L-lysine.. Its pathway is protein modification; protein ubiquitination. In terms of biological role, E3 ubiquitin ligase that plays a role in various biological processes including neural stem cell differentiation, innate immunity, inflammatory resonse and autophagy. Plays a role in virus-triggered induction of IFN-beta and TNF-alpha by mediating the ubiquitination of STING1. Mechanistically, targets STING1 for 'Lys-63'-linked ubiquitination which promotes the interaction of STING1 with TBK1. Regulates bacterial clearance and promotes autophagy in Mycobacterium tuberculosis-infected macrophages. Negatively regulates TLR3/4-mediated innate immune and inflammatory response by triggering the autophagic degradation of TICAM1 in an E3 activity-independent manner. Plays an essential role in oxidative stress induced cell death by inducing loss of transmembrane potential and enhancing mitochondrial reactive oxygen species (ROS) production during oxidative stress conditions. Ubiquitinates XIAP and targets it for proteasomal degradation. Ubiquitinates DTNBP1 (dysbindin) and promotes its degradation. May ubiquitinate BBS2. Ubiquitinates PIAS4/PIASY and promotes its degradation in keratinocytes treated with UVB and TNF-alpha. Also acts as a regulator of autophagy by mediating formation of unanchored 'Lys-63'-linked polyubiquitin chains that activate ULK1: interaction with AMBRA1 is required for ULK1 activation. Positively regulates dendritic branching by promoting ubiquitination and subsequent degradation of the epigenetic factor CDYL. Under metabolic stress and phosphorylation by CHK2, mediates 'Lys-63'-linked ubiquitination of ATG7 at 'Lys-45' to initiate autophagy. Functionally, (Microbial infection) May play a significant role in mediating the biological activity of the HIV-1 Tat protein in vivo. Binds specifically to the activation domain of HIV-1 Tat and can also interact with the HIV-2 and EIAV Tat proteins in vivo. In Homo sapiens (Human), this protein is E3 ubiquitin-protein ligase TRIM32.